Consider the following 185-residue polypeptide: Threonylcarbamoyl-AMP synthase (185 aa).

The YrdC-like domain occupies 1–185 (MKNLNQVVDA…AKTGNTLRQG (185 aa)).

Belongs to the SUA5 family. TsaC subfamily.

It is found in the cytoplasm. It carries out the reaction L-threonine + hydrogencarbonate + ATP = L-threonylcarbamoyladenylate + diphosphate + H2O. Its function is as follows. Required for the formation of a threonylcarbamoyl group on adenosine at position 37 (t(6)A37) in tRNAs that read codons beginning with adenine. Catalyzes the conversion of L-threonine, HCO(3)(-)/CO(2) and ATP to give threonylcarbamoyl-AMP (TC-AMP) as the acyladenylate intermediate, with the release of diphosphate. The polypeptide is Threonylcarbamoyl-AMP synthase (Aliivibrio fischeri (strain ATCC 700601 / ES114) (Vibrio fischeri)).